Reading from the N-terminus, the 568-residue chain is Calcium-dependent protein kinase 5 (568 aa).

Positions Glu125–Phe379 constitute a Protein kinase domain. ATP is bound by residues Leu131–Val139 and Lys154. Asp245 acts as the Proton acceptor in catalysis. A J domain autoinhibitory motif motif is present at residues Lys400 to Cys408. The j domain stretch occupies residues Lys400–Glu435. Positions Lys409–Ile418 match the J domain EF-hand interaction motif motif. 4 consecutive EF-hand domains span residues Lys425–Glu460, Asp462–Phe495, Gln496–Gln531, and Phe534–Glu568. Asp438, Asn440, Asp442, Glu449, Asp473, Asp475, Asn477, Glu484, Asp509, Asp511, Asp513, Glu520, Asp547, Asn549, Asp551, and Glu558 together coordinate Ca(2+).

Belongs to the protein kinase superfamily. Ser/Thr protein kinase family. CDPK subfamily. Mg(2+) is required as a cofactor. May be palmitoylated. Post-translationally, autophosphorylated in vitro.

The protein resides in the cytoplasm. The protein localises to the cytoplasmic vesicle. It localises to the secretory vesicle. It is found in the microneme membrane. Its subcellular location is the cell membrane. It catalyses the reaction L-seryl-[protein] + ATP = O-phospho-L-seryl-[protein] + ADP + H(+). The catalysed reaction is L-threonyl-[protein] + ATP = O-phospho-L-threonyl-[protein] + ADP + H(+). With respect to regulation, activated by calcium. Upon calcium binding to the EF-hand domains, the C-terminus of the junction domain (J domain) undergoes a conformational change which results in the dissociation of the pseudo-substrate inhibitory motif from the catalytic domain. This, in turn, may facilitate the autophosphorylation of the activation loop at Thr-285, which leads to the kinase activation. Its function is as follows. Calcium-dependent protein kinase which acts as a sensor and effector of intracellular Ca(2+) levels probably in part downstream of cGMP-activated PKG kinase. Plays a central role in host erythrocytes and hepatocytes infection cycles. During the liver stage, involved in sporozoite motility and thus in sporozoite invasion of host hepatocytes, probably together with CDPK1 and CDPK4. Involved in merosome egress from host hepatocytes, probably together with CDPK4. Required for the release of hepatic merozoites from merosomes in the host blood stream. During the asexual blood stage, required for merozoite egress from host erythrocytes by triggering microneme secretion. Phosphorylates transporter NPT1 at late schizont stage. This chain is Calcium-dependent protein kinase 5, found in Plasmodium falciparum (isolate 3D7).